A 79-amino-acid polypeptide reads, in one-letter code: ATP synthase subunit c (79 aa).

Transmembrane regions (helical) follow at residues 11–31 (IAVA…IGIL) and 53–73 (FFVV…LGLY).

The protein belongs to the ATPase C chain family. F-type ATPases have 2 components, F(1) - the catalytic core - and F(0) - the membrane proton channel. F(1) has five subunits: alpha(3), beta(3), gamma(1), delta(1), epsilon(1). F(0) has three main subunits: a(1), b(2) and c(10-14). The alpha and beta chains form an alternating ring which encloses part of the gamma chain. F(1) is attached to F(0) by a central stalk formed by the gamma and epsilon chains, while a peripheral stalk is formed by the delta and b chains.

It localises to the cell membrane. Functionally, f(1)F(0) ATP synthase produces ATP from ADP in the presence of a proton or sodium gradient. F-type ATPases consist of two structural domains, F(1) containing the extramembraneous catalytic core and F(0) containing the membrane proton channel, linked together by a central stalk and a peripheral stalk. During catalysis, ATP synthesis in the catalytic domain of F(1) is coupled via a rotary mechanism of the central stalk subunits to proton translocation. Its function is as follows. Key component of the F(0) channel; it plays a direct role in translocation across the membrane. A homomeric c-ring of between 10-14 subunits forms the central stalk rotor element with the F(1) delta and epsilon subunits. The chain is ATP synthase subunit c from Buchnera aphidicola subsp. Schizaphis graminum (strain Sg).